The following is a 322-amino-acid chain: Transmembrane and ubiquitin-like domain-containing protein 2 (322 aa).

Residues 38–58 (VVAGVVVLILALVLAWLSTYV) traverse the membrane as a helical segment. A disordered region spans residues 88–168 (VAGQGTPEPT…VRSEDSTCLP (81 aa)). The span at 115 to 130 (EGGGDPTGEPGAGGGV) shows a compositional bias: gly residues. One can recognise a Ubiquitin-like domain in the interval 174-247 (ISVRLKFFND…IHCHRSPPGS (74 aa)). 2 helical membrane passes run 267–287 (LGVS…GVVW) and 296–316 (FFTA…SFLV).

Its subcellular location is the membrane. This is Transmembrane and ubiquitin-like domain-containing protein 2 (TMUB2) from Bos taurus (Bovine).